The sequence spans 487 residues: Serralysin (487 aa).

The propeptide occupies 1 to 16 (MQSTKKAIEITESSLA). His-192 contributes to the Zn(2+) binding site. Glu-193 is an active-site residue. 3 residues coordinate Zn(2+): His-196, His-202, and Tyr-232. Residues Arg-269, Gly-271, Thr-273, Asp-301, Gly-303, Gly-304, Asp-306, Thr-343, Glu-345, Gly-350, Gly-352, Asp-354, Asn-359, Ala-361, Asn-363, Gly-367, Gly-368, Ala-369, Gly-370, Asp-372, Gly-376, Gly-377, Gly-378, Gly-379, Asp-381, Gly-385, Gly-386, Ala-387, Gly-388, Asp-390, Asp-399, Asp-406, and Asp-416 each coordinate Ca(2+). Hemolysin-type calcium-binding repeat units lie at residues 348–365 (IGGS…NNVL) and 366–383 (KGGA…ADEL).

It belongs to the peptidase M10B family. It depends on Ca(2+) as a cofactor. Zn(2+) serves as cofactor.

It is found in the secreted. The catalysed reaction is Preferential cleavage of bonds with hydrophobic residues in P1'.. Its function is as follows. Has insecticidal activity against the locust M.palpalis. When administered orally to locusts at a low dose it causes them to lie on their sides exhibiting sporadic limb movements and muscular twitching, followed by full recovery. When administered at higher doses the same symptoms are observed, followed by death. The chain is Serralysin from Serratia marcescens.